We begin with the raw amino-acid sequence, 958 residues long: MASIAVTTTTTTTTAEFVTSPRTSIVPEQPNTLHDVIAQAVDSYPLHELGFITSSAHDSSIQTKTFSAFNQYVRNLARAMLEWGKPTGSVVVVYLTEHEDNMTAVWACLLAGFVPCLQPALSAQQAHKEGHVAHIKNLFGSATWLTSELGAEQINSISGLEVHLLSELKSSAEKFTVAADWVAYEAKPDDEAILFLTSGSTGFSKAVVHTHRTILAACRAKGQSYGLTSESQVLNWVGFDHVAGSLEMHITPLLYGASQLHVHASAILADPLRLLRLIDEKSIELAFAPNFLLSKLTRDLEKRTDLFGSFDLSSIKRINSGGEAVVSKTAQAFAATMKQLSKNPSAVSFVISAGFGMTETCAGCIYDPVDVLKNKPAHEFLDLGRPINGCEMRIVDPEDGATLRPDGESGELQVRGPMVFVRYYNNAEATSSSFVEGGWYRTGDVGIIENGVMRLSGRIKDTVIVHGVSYGIPELETYLQTVEGVTHSFLAAAPYRAPGQETEGFIIFYSPTFDLNGADASTKLFATHRALRDICVKMITLPPQFVVPIPVNQMEKTTLGKLSRARLISLFKQGQLAQHIARSEELLSEARGATFVAPSTETEKALAKIYAGIFNLAESEMSASDNFFELGGTSIDVIRLKREGEAHFGLPEIPTIQILKHPVVSSLANYVNALLSKDSQTEEYDPIVPLQLTGNKTPIFFVHPGVGEVLIFVNLAKYFQNERPFYALRARGFEPGHPFFTSMDEMVSCYAAAVKRTQATGPYAIAGYSYGGVVAFEVAKRLEAMGDEVKFTGLINIPPHIADRMHEIDWTGGMLNLSYFLGLVSKHDANDLAPALRPMTRNEQLEVVWKLSPPERLVELQLTPGKLDHWVDIAGSLIECGKDYNPSGSVSAVDVFYAIPLRGSKADWLNNQLKPWSGFSRGDASYTDVPGQHYTLMDFDHVPQFQKIFRGRLEARGL.

Residues 60–465 (SIQTKTFSAF…SGRIKDTVIV (406 aa)) form an adenylation (A) domain region. Residues 597–675 (APSTETEKAL…SLANYVNALL (79 aa)) form the Carrier domain. The thiolation and peptide carrier (T) domain stretch occupies residues 602-672 (TEKALAKIYA…VVSSLANYVN (71 aa)). Ser634 is modified (O-(pantetheine 4'-phosphoryl)serine). Residues 698-946 (PIFFVHPGVG…MDFDHVPQFQ (249 aa)) are thioesterase (TE) domain.

It belongs to the ATP-dependent AMP-binding enzyme family.

Its pathway is secondary metabolite biosynthesis. An L-tyrosine:2-oxoglutarate aminotransferase and atromentin synthetase greA catalyze consecutive steps to turn over L-tyrosine into atromentin, which represents the generic precursor molecule for the entire terphenylquinone and pulvinic acid family of pigments, which are widely distributed secondary metabolites in homobasidiomycetes. The first step catalyzed by the aminotransferase converts L-tyrosine in to 4-hydroxyphenylpyruvate (4-HPP). Adenylation of two 4-HPP monomers by the greA adenylation (A) domain, covalent tethering of the monomers as a thioester and oxoester onto the greA thiolation (T) and thioesterase (TE) domains, respectively, and symmetric C-C-bond formation between two monomers catalyzed by the greA TE domain leads to atromentin. The protein is Atromentin synthetase greA (greA) of Suillus grevillei (Larch bolete).